Consider the following 158-residue polypeptide: Deoxyuridine 5'-triphosphate nucleotidohydrolase (158 aa).

Substrate contacts are provided by residues 75 to 77 (RSG), Asn-88, 92 to 94 (TVD), and Lys-102.

It belongs to the dUTPase family. It depends on Mg(2+) as a cofactor.

It carries out the reaction dUTP + H2O = dUMP + diphosphate + H(+). Its pathway is pyrimidine metabolism; dUMP biosynthesis; dUMP from dCTP (dUTP route): step 2/2. Functionally, this enzyme is involved in nucleotide metabolism: it produces dUMP, the immediate precursor of thymidine nucleotides and it decreases the intracellular concentration of dUTP so that uracil cannot be incorporated into DNA. The chain is Deoxyuridine 5'-triphosphate nucleotidohydrolase from Bifidobacterium longum (strain DJO10A).